Consider the following 236-residue polypeptide: Ribonuclease PH (236 aa).

Phosphate-binding positions include Arg-86 and 124–126; that span reads GTR.

Belongs to the RNase PH family. As to quaternary structure, homohexameric ring arranged as a trimer of dimers.

The catalysed reaction is tRNA(n+1) + phosphate = tRNA(n) + a ribonucleoside 5'-diphosphate. Phosphorolytic 3'-5' exoribonuclease that plays an important role in tRNA 3'-end maturation. Removes nucleotide residues following the 3'-CCA terminus of tRNAs; can also add nucleotides to the ends of RNA molecules by using nucleoside diphosphates as substrates, but this may not be physiologically important. Probably plays a role in initiation of 16S rRNA degradation (leading to ribosome degradation) during starvation. This chain is Ribonuclease PH, found in Thermodesulfovibrio yellowstonii (strain ATCC 51303 / DSM 11347 / YP87).